Consider the following 352-residue polypeptide: Fe-S cluster assembly protein DRE2 (352 aa).

Residues 1–11 (MAPTAVYTQKD) show a composition bias toward polar residues. The segment at 1–24 (MAPTAVYTQKDSPSSSQPSSKGPA) is disordered. Positions 1-196 (MAPTAVYTQK…TVTSAPSVPL (196 aa)) are N-terminal SAM-like domain. The linker stretch occupies residues 196 to 237 (LLLRKRGDPAKKKALWALTTDASASPSTKIDADALLTAEDKA). Positions 243, 257, 260, and 262 each coordinate [2Fe-2S] cluster. Positions 243 to 262 (CAPVDRSAPRRKKACKNCSC) are fe-S binding site A. [4Fe-4S] cluster is bound by residues cysteine 315, cysteine 318, cysteine 326, and cysteine 329. 2 short sequence motifs (cx2C motif) span residues 315 to 318 (CGSC) and 326 to 329 (CAGC). The interval 315–329 (CGSCFLGDAFRCAGC) is fe-S binding site B.

The protein belongs to the anamorsin family. As to quaternary structure, monomer. Interacts with TAH18. Interacts with MIA40. [2Fe-2S] cluster is required as a cofactor. [4Fe-4S] cluster serves as cofactor.

The protein localises to the cytoplasm. Its subcellular location is the mitochondrion intermembrane space. Component of the cytosolic iron-sulfur (Fe-S) protein assembly (CIA) machinery required for the maturation of extramitochondrial Fe-S proteins. Part of an electron transfer chain functioning in an early step of cytosolic Fe-S biogenesis, facilitating the de novo assembly of a [4Fe-4S] cluster on the scaffold complex CFD1-NBP35. Electrons are transferred to DRE2 from NADPH via the FAD- and FMN-containing protein TAH18. TAH18-DRE2 are also required for the assembly of the diferric tyrosyl radical cofactor of ribonucleotide reductase (RNR), probably by providing electrons for reduction during radical cofactor maturation in the catalytic small subunit RNR2. This is Fe-S cluster assembly protein DRE2 from Coprinopsis cinerea (strain Okayama-7 / 130 / ATCC MYA-4618 / FGSC 9003) (Inky cap fungus).